The primary structure comprises 33 residues: Neutrophil defensin 3 (33 aa).

Disulfide bonds link Cys-3/Cys-31, Cys-5/Cys-20, and Cys-10/Cys-30.

The protein belongs to the alpha-defensin family.

Its subcellular location is the secreted. In terms of biological role, anti-fungal and bactericidal activity, greater against Gram-positive bacteria. The chain is Neutrophil defensin 3 from Mesocricetus auratus (Golden hamster).